A 429-amino-acid chain; its full sequence is Glutamate-1-semialdehyde 2,1-aminomutase 1 (429 aa).

An N6-(pyridoxal phosphate)lysine modification is found at K268.

This sequence belongs to the class-III pyridoxal-phosphate-dependent aminotransferase family. HemL subfamily. In terms of assembly, homodimer. Pyridoxal 5'-phosphate serves as cofactor.

Its subcellular location is the cytoplasm. The enzyme catalyses (S)-4-amino-5-oxopentanoate = 5-aminolevulinate. Its pathway is porphyrin-containing compound metabolism; protoporphyrin-IX biosynthesis; 5-aminolevulinate from L-glutamyl-tRNA(Glu): step 2/2. This chain is Glutamate-1-semialdehyde 2,1-aminomutase 1, found in Listeria welshimeri serovar 6b (strain ATCC 35897 / DSM 20650 / CCUG 15529 / CIP 8149 / NCTC 11857 / SLCC 5334 / V8).